The sequence spans 2530 residues: MVGERRAGNLLVPLGPRLQAYPEELLRQRPGHDGHPEYLIRWSVLKCSEEGKVSSEEEKTEHLLMWLSAPEVYANCPMLLRERPIPKGPQHEPAGEVGSFPRDPGGLDELAMTEMEADVRALVRRAARQLAEGGTSSLTAAVLHTVHVLSAYASIGPLTGVFRETGALDLLMHMLCNPEPQIRRSAGKMLQALAAHDAGSRAHVLLSLSQHDGIEQHMDFDSRYTLLELFAETTSTEEHCMALEGIHLPQIPGKLLFSLVKRYLCVTSLLDQLNNSPESGAGDQSSPCLTKEKSRAQQELEFSMAVGNLISELVRSMGWARNLSEQGALPPRPSRSIFQPCLSGPPPLLLPTIVTTPRKQGRAFRGRSEFSSRSGYGEYVQQTVQPGMRVRILDDYEEISAGDEGEFQQSNNGVPPVQVFWQSTGRTYWVHWHMLEILGPEEATGDSASAAVEKGAGAAVLGTVCPSWDWKPTHGLYSLPYLQPEPQKNEEESGYLTQAEWWELLFFIKKLDVGEQQPIFQNLHEKLDEEALGEKALGELSVPIEMAEGVLQVLSNRFEGSNLCDLLNSRIYTKYGLLPKELGSLPSSRRHSCSPEPEEGSRSAANFSEKEEACRANAVPPEAEMELASAKTEPPKAQSDSQLFNQLLVTEGMTLPPETQEAATEMARALRGPGPRSSLDQHVAAVLATVQISSLDTNLQLSGLCALSQAVEEVTERDHPLVRPDRPLREKLVKTLVDLLTNQVGEKMVVVMALRLLYLLMTKHEWRPLFAREGGIYAVLICMQEYKTSVLVQQAGLAALKMLAIANSSDVPTFIPSRDSIQPLFDTQMTREIFASIDSATRPGSESLLLSVPAAVVLMLNTEGCSSAVRNGLLLLNLLLCNHHTLGDQIITQELRDTLFRHSGIAPGTEPMPTTRTILTMLLSRYSEPRGSPERAVLETPSTQGQDGSPESLIRSLVGDLSAELFLDLERVLCHEGSPPAAVRPLLRRLQQETQPFLLLLRTLDAPGPNRTLLLTILRVMTRLLDHPETMVLPWHEVLEPCLNCLNGPSSDSEVVQEVTCFLHRLALMQKDYAVVLCCLGGKEALSKVLDKHSTQLLLASELRHLVAECEKYSQLCSNLTSSILAGCIQMVLGQIEDHRRTYKPITIPFFDVFLRHLCQGSSVEVKEDRCWEKVEVSSNPHRASKLTDRNPKTYWESNGSTGSHSITLHMHRGVLIRQLTLLVASEDSSYMPARVVVFGGDNVGCISTELNTVNVMPSASRVTLLENLTRFWPIIQIRIKRCQQGGIDTRVRGVEVLGPKPTFWPLFREQLCRRTCLFYTIRAQAWSRDIAEDRQRLLQLYPRLNRVLRHEQNFADRFLPDDEAAQALGKTCWEALVSPLVQNITSPDAGGVSSLGWLLDQYLEHRESTRSRQGPAASFASQVRRLCHLLVHVEAPPGPSPEPSSQPLSKNSKGQDGSPTPAPTPVCPSTSLRNLTQCWLSVVQGQVSRFLAAAWRASDFVPRYCSLYQRLQSAGSELFGPRAAFTLALRSGFSGALLQQSFLTAAHISEQFARHIDQQIHGGLLGGAAGVGMLGRLQRHLEPIMVLSGLELATTFEHFYQHYMADRLLSLGSSWLEGAVLEQIGPCFPNRLPQLMLQSLHTSEELQHRFHLFQLQQLDRQLLEQGDQEEWRPEKVEEDDEGQETGRELFTDPGPAISVLVLSPRCWPVSPLCYLHHPRKHLQAELCDALERFSSFYSHSQNCPVLDIGPHRRLQWTWLGRAELQFGDQTLHVSTVQMWLLLNFNQSEEVSVETLLRNSDLSPELLHQALLPLTSDNGPLTLEETQDYPQGGVLRLREPRSQTHEEVLWLIPPQTYLSVEKDEGRTLEQKRNLLSCLLVRILKAHREKGLHIDQLVCLVLEAWQKGPDPPGRLGNAAAVGVACSSTDVLSCILHLLGQGYVERRDDRPQVLMYATPEPMGPCRGQADVPFCGNKNTETSRPSPEAVVALASLQLPAGRTMSPQEVEGLMEQTVRQVQETLNLEPDVAQHLLAHSHWGTEQLLQSYSDDPEPLLLAAGLRVPQAQVVPTRPDQCPVCVTPLGPHDDSPSLCCLHCCCKSCWNEYLTTRIEQNFVLNCTCPIADCPAQPTGAFIRNIVSSPEVISKYEKALLRGYVESCSNLTWCTNPQGCDRILCRQGLGSGTTCSKCGWASCFSCSFPEAHYPASCGHMSQWVDDGGYYDGMSVEAQSKHLAKLISKRCPSCQAPIEKNEGCLHMTCARCNHGFCWRCLKSWKPSHKDYYNCSAMVSKAARQEKRFQDYNERCTFHHQAREFAVNLRNQASAIQEVPPPKSFTFLQDACRALEQARKVLAYACVYSFYSQDTEYMDVVEQQTENLELHTNALQILLEETLLRCRDLASSLRFLRADCLSTGTELLRRIQERLLAILQHSTQDFRVGLQSPSVETREVKGSNVPSDQPQGSSGLEVEDEEEEEEEEEEEEEEEEEDVPEWQHEFDEELDNDSFSYDEESENLDRETFFFGDEDEDDESYD.

Lysine 87 is covalently cross-linked (Glycyl lysine isopeptide (Lys-Gly) (interchain with G-Cter in ubiquitin)). A CPH domain is found at 367-440; it reads RSEFSSRSGY…HWHMLEILGP (74 aa). Disordered regions lie at residues 585–639 and 930–951; these read LPSS…KAQS and RGSPERAVLETPSTQGQDGSPE. Residues 940 to 949 are compositionally biased toward polar residues; it reads TPSTQGQDGS. Phosphoserine is present on serine 978. A DOC domain is found at 1145–1324; that stretch reads PITIPFFDVF…RTCLFYTIRA (180 aa). ATP is bound at residue 1365–1372; it reads AAQALGKT. 2 disordered regions span residues 1435–1468 and 1667–1690; these read EAPPGPSPEPSSQPLSKNSKGQDGSPTPAPTPVC and GDQEEWRPEKVEEDDEGQETGREL. A Phosphoserine modification is found at serine 1459. A Glycyl lysine isopeptide (Lys-Gly) (interchain with G-Cter in NEDD8) cross-link involves residue lysine 1884. Residues 2070 to 2287 are TRIAD supradomain; the sequence is RPDQCPVCVT…KDYYNCSAMV (218 aa). Cysteine 2074, cysteine 2077, cysteine 2092, histidine 2094, cysteine 2097, cysteine 2100, cysteine 2119, cysteine 2124, cysteine 2164, cysteine 2170, cysteine 2185, cysteine 2188, cysteine 2193, cysteine 2196, histidine 2202, cysteine 2207, cysteine 2240, and cysteine 2243 together coordinate Zn(2+). The segment at 2074 to 2124 adopts an RING-type 1 zinc-finger fold; sequence CPVCVTPLGPHDDSPSLCCLHCCCKSCWNEYLTTRIEQNFVLNCTCPIADC. Residues 2144-2207 form an IBR-type zinc finger; that stretch reads SKYEKALLRG…FPEAHYPASC (64 aa). The segment at 2240–2269 adopts an RING-type 2; atypical zinc-finger fold; the sequence is CPSCQAPIEKNEGCLHMTCARCNHGFCWRC. Cysteine 2253 is a catalytic residue. Zn(2+) is bound by residues cysteine 2258, cysteine 2261, cysteine 2266, cysteine 2269, histidine 2277, and cysteine 2283. Serine 2440 is subject to Phosphoserine. A disordered region spans residues 2443–2530; that stretch reads VETREVKGSN…DEDEDDESYD (88 aa). The span at 2452-2462 shows a compositional bias: polar residues; it reads NVPSDQPQGSS. Positions 2459–2500 form a coiled coil; sequence QGSSGLEVEDEEEEEEEEEEEEEEEEEDVPEWQHEFDEELDN. Acidic residues-rich tracts occupy residues 2465-2510 and 2520-2530; these read EVED…EESE and GDEDEDDESYD.

It belongs to the cullin family. As to quaternary structure, component of a Cul9-RING complex consisting of CUL9 and RBX1; the CUL9-RBX1 complex is a heterododecamer composed of six CUL9 and six RBX1 protomers. Interacts (via C-terminal TRIAD/RBR supradomain) with E2 ubiquitin-conjugating enzyme UBE2L3. Interacts with CUL7; the interaction with the CUL7 component of the 3M complex leads to inhibition of CUL9 activity. The CUL7-CUL9 heterodimer seems to interact specifically with TP53, likely via the CPH domain. Forms a complex with p53/TP53 in the cytoplasm of unstressed cells. Interacts with UBCH7 and UBCH8. Post-translationally, autoubiquitinated by the CUL9-RBX1 complex at Lys-87. Neddylated. Neddylation is mediated by E1 enzyme UBA3-NAE1 complex and E2 enzyme UBE2F. Structural rearrangment of the C-terminal TRIAD/RBR supradomain may play a role in neddylation and deneddylation.

Its subcellular location is the cytoplasm. Its function is as follows. Core component of the Cul9-RING ubiquitin-protein ligase complex composed of CUL9 and RBX1. The CUL9-RBX1 complex mediates ubiquitination and subsequent degradation of BIRC5 and is required to maintain microtubule dynamics and genome integrity. Acts downstream of the 3M complex, which inhibits CUL9 activity and the ubiquitination of BIRC5. The CUL9-RBX1 complex also mediates mono-ubiquitination of p53/TP53. Acts as a cytoplasmic anchor protein in p53/TP53-associated protein complex. Regulates the subcellular localization of p53/TP53 and its subsequent function. Ubiquitinates apurinic/apyrimidinic endodeoxyribonuclease APEX2. Ubiquitination by the CUL9-RBX1 complex is predominantly mediated by E2 ubiquitin-conjugating enzymes UBE2L3 and UBE2D2. The sequence is that of Cullin-9 (Cul9) from Mus musculus (Mouse).